Here is a 216-residue protein sequence, read N- to C-terminus: Small ribosomal subunit protein uS3c (216 aa).

The region spanning isoleucine 43 to threonine 118 is the KH type-2 domain.

It belongs to the universal ribosomal protein uS3 family. In terms of assembly, part of the 30S ribosomal subunit.

Its subcellular location is the plastid. It localises to the chloroplast. This is Small ribosomal subunit protein uS3c (rps3) from Phaseolus angularis (Azuki bean).